A 113-amino-acid chain; its full sequence is Large ribosomal subunit protein bL17 (113 aa).

It belongs to the bacterial ribosomal protein bL17 family. As to quaternary structure, part of the 50S ribosomal subunit. Contacts protein L32.

The polypeptide is Large ribosomal subunit protein bL17 (Caldicellulosiruptor saccharolyticus (strain ATCC 43494 / DSM 8903 / Tp8T 6331)).